Reading from the N-terminus, the 484-residue chain is Cytochrome P450 monooxygenase poxD (484 aa).

The helical transmembrane segment at 2–24 threads the bilayer; the sequence is VSPVVLATTAMIVVFLLAQRYLS. A heme-binding site is contributed by cysteine 429.

This sequence belongs to the cytochrome P450 family. Requires heme as cofactor.

Its subcellular location is the membrane. It participates in secondary metabolite biosynthesis. In terms of biological role, cytochrome P450 monooxygenase; part of the gene cluster that mediates the biosynthesis of oxaleimides, cytotoxic compounds containing an unusual disubstituted succinimide moiety. The first step of the pathway is provided by the HR-PKS poxF that serves in a new mode of collaborative biosynthesis with the PKS-NRPS poxE, by providing the olefin containing amino acid substrate via the synthesis of an ACP-bound dec-4-enoate. The cytochrome P450 monooxygenase poxM-catalyzed oxidation at the alpha-position creates the enzyme-bound 2-hydroxydec-4-enoyl-ACP thioester, which may be prone to spontaneous hydrolysis to yield 2-hydroxydec-4-enoic acid due to increased electrophilicity of the carbonyl. 2-hydroxydec-4-enoic acid can then be further oxidized by poxM to yield the alpha-ketoacid 2-oxodec-4-enoicacid, which is reductively aminated by the aminotransferase poxL to yield (S,E)-2-aminodec-4-enoic acid. The Hybrid PKS-NRPS synthetase poxE then performs condensation between the octaketide product of its PKS modules and the amino group of (S,E)-2-aminodec-4-enoic acid which is activated and incorporated by the adenylation domain. The resulting aminoacyl product can be cyclized by the Diels-Alderase PoxQ and reductively released by the reductive (R) domain of poxE to yield an aldehyde intermediate. The released aldehyde is then substrate for a Knoevenagel condensation by the hydrolyase poxO followed by an oxidation at the 5-position of the pyrrolidone ring. The presence of the olefin from the amino acid building block allows for migration of the substituted allyl group to occur. This allylic transposition reaction takes place in a conjugate addition, semipinacol-like fashion to yield a succinimide intermediate. Iterative two-electron oxidations of the C7 methyl of the succinimide intermediate to the carboxylic acid can be catalyzed by one of two remaining cytochrome P450 monooxygenasess poxC or poxD to yield oxaleimide A. Subsequent oxidation yields the maleimide scaffold oxaleimide I. Both oxaleimide A and oxaleimide I can undergo oxidative modifications in the decalin ring to yield the series of products oxaleimides B to H. The chain is Cytochrome P450 monooxygenase poxD from Penicillium oxalicum.